The chain runs to 99 residues: Large ribosomal subunit protein uL23 (99 aa).

The protein belongs to the universal ribosomal protein uL23 family. As to quaternary structure, part of the 50S ribosomal subunit. Contacts protein L29, and trigger factor when it is bound to the ribosome.

In terms of biological role, one of the early assembly proteins it binds 23S rRNA. One of the proteins that surrounds the polypeptide exit tunnel on the outside of the ribosome. Forms the main docking site for trigger factor binding to the ribosome. This Shewanella woodyi (strain ATCC 51908 / MS32) protein is Large ribosomal subunit protein uL23.